The chain runs to 320 residues: Olfactory receptor 2T12 (320 aa).

Over 1 to 23 the chain is Extracellular; the sequence is MEMRNTTPDFILLGLFNHTRAHQ. A glycan (N-linked (GlcNAc...) asparagine) is linked at asparagine 17. The helical transmembrane segment at 24-47 threads the bilayer; it reads VLFMMLLATVLTSLFSNALMILLI. The Cytoplasmic segment spans residues 48 to 55; the sequence is HWDHRLHR. A helical membrane pass occupies residues 56–77; the sequence is PMYFLLSQLSLMDMMLVSTTVP. Residues 78 to 98 lie on the Extracellular side of the membrane; sequence KMAADYLTGNKAISRAGCGVQ. Cysteine 95 and cysteine 187 are disulfide-bonded. A helical membrane pass occupies residues 99 to 118; the sequence is IFFLPTLGGGECFLLAAMAY. The Cytoplasmic portion of the chain corresponds to 119-137; that stretch reads DRYAAVCHPLRYPTLMSWQ. The chain crosses the membrane as a helical span at residues 138-156; the sequence is LCLRMTMSSWLLGAADGLL. Topologically, residues 157–193 are extracellular; that stretch reads QAVATLSFPYCGAHEIDHFFCEAPVLVRLACADTSVF. The chain crosses the membrane as a helical span at residues 194 to 217; it reads ENAMYICCVLMLLVPFSLILSSYG. The Cytoplasmic portion of the chain corresponds to 218-234; the sequence is LILAAVLLMRSTEARKK. Residues 235–257 traverse the membrane as a helical segment; it reads AFATCSSHVAVVGLFYGAGIFTY. At 258-270 the chain is on the extracellular side; that stretch reads MRPKSHRSTNHDK. A helical membrane pass occupies residues 271–290; that stretch reads VVSAFYTMFTPLLNPLIYSV. Residues 291 to 320 lie on the Cytoplasmic side of the membrane; it reads RNSEVKEALKRWLGTCVNLKHQQNEAHRSR.

The protein belongs to the G-protein coupled receptor 1 family.

Its subcellular location is the cell membrane. Its function is as follows. Odorant receptor. This chain is Olfactory receptor 2T12 (OR2T12), found in Homo sapiens (Human).